Here is a 260-residue protein sequence, read N- to C-terminus: Indole-3-glycerol phosphate synthase (260 aa).

The protein belongs to the TrpC family.

The enzyme catalyses 1-(2-carboxyphenylamino)-1-deoxy-D-ribulose 5-phosphate + H(+) = (1S,2R)-1-C-(indol-3-yl)glycerol 3-phosphate + CO2 + H2O. The protein operates within amino-acid biosynthesis; L-tryptophan biosynthesis; L-tryptophan from chorismate: step 4/5. This Neisseria gonorrhoeae (strain ATCC 700825 / FA 1090) protein is Indole-3-glycerol phosphate synthase.